A 261-amino-acid polypeptide reads, in one-letter code: Kallikrein-2 (261 aa).

A signal peptide spans 1-18 (MWDLVLSIALSVGCTGAV). The propeptide at 19-24 (PLIQSR) is activation peptide. Residues 25-258 (IVGGWECEKH…YRKWIKDTIA (234 aa)) form the Peptidase S1 domain. Disulfide bonds link cysteine 31–cysteine 173, cysteine 50–cysteine 66, cysteine 152–cysteine 219, cysteine 184–cysteine 198, and cysteine 209–cysteine 234. Histidine 65 (charge relay system) is an active-site residue. Asparagine 102 is a glycosylation site (N-linked (GlcNAc...) asparagine). Catalysis depends on aspartate 120, which acts as the Charge relay system. The active-site Charge relay system is serine 213.

This sequence belongs to the peptidase S1 family. Kallikrein subfamily.

It carries out the reaction Preferential cleavage of Arg-|-Xaa bonds in small molecule substrates. Highly selective action to release kallidin (lysyl-bradykinin) from kininogen involves hydrolysis of Met-|-Xaa or Leu-|-Xaa.. Functionally, glandular kallikreins cleave Met-Lys and Arg-Ser bonds in kininogen to release Lys-bradykinin. The chain is Kallikrein-2 (KLK2) from Homo sapiens (Human).